A 299-amino-acid chain; its full sequence is GTPase Era (299 aa).

In terms of domain architecture, Era-type G spans Lys5–Glu172. The tract at residues Gly13–Ser20 is G1. Gly13–Ser20 contributes to the GTP binding site. The segment at Gln39 to Asn43 is G2. Positions Asp60 to Gly63 are G3. Residues Asp60–Ile64 and Asn122–Asp125 contribute to the GTP site. The segment at Asn122–Asp125 is G4. The interval Ile151 to Ala153 is G5. Residues Thr203 to Arg280 enclose the KH type-2 domain.

The protein belongs to the TRAFAC class TrmE-Era-EngA-EngB-Septin-like GTPase superfamily. Era GTPase family. Monomer.

The protein resides in the cytoplasm. It is found in the cell membrane. An essential GTPase that binds both GDP and GTP, with rapid nucleotide exchange. Plays a role in 16S rRNA processing and 30S ribosomal subunit biogenesis and possibly also in cell cycle regulation and energy metabolism. In Staphylococcus aureus (strain bovine RF122 / ET3-1), this protein is GTPase Era.